Here is a 749-residue protein sequence, read N- to C-terminus: G-type lectin S-receptor-like serine/threonine-protein kinase At1g61460 (749 aa).

The N-terminal stretch at 1–25 (MRITFFASLLLFTNTIFISFSFAIA) is a signal peptide. Positions 26-145 (GINKESPLSI…FSGRTLWQSF (120 aa)) constitute a Bulb-type lectin domain. Residues 26–392 (GINKESPLSI…ELGGNKRKKT (367 aa)) are Extracellular-facing. N-linked (GlcNAc...) asparagine glycans are attached at residues Asn54, Asn95, Asn118, and Asn135. One can recognise an EGF-like; atypical domain in the interval 247 to 280 (PAHSCDYYGVCGPFGICVKSVCKCFKGFIPKYIE). Intrachain disulfides connect Cys251/Cys263 and Cys257/Cys268. N-linked (GlcNAc...) asparagine glycans are attached at residues Asn286, Asn302, and Asn341. A PAN domain is found at 299 to 381 (CQENSTKKDA…GEILSIRLAR (83 aa)). 2 disulfides stabilise this stretch: Cys334–Cys355 and Cys338–Cys344. The chain crosses the membrane as a helical span at residues 393 to 413 (ITASIVSLSLFLILGSTAFGF). Residues 414 to 749 (WRYRVKHNAS…EMTKSVILGR (336 aa)) lie on the Cytoplasmic side of the membrane. The Protein kinase domain maps to 454–721 (FSLSNKLGQG…DLPSPKQPTF (268 aa)). ATP is bound by residues 460-468 (LGQGGFGSV) and Lys482. The segment at 543-560 (RKRLEIDWPKRFDIIQGI) is caM-binding. Asp579 functions as the Proton acceptor in the catalytic mechanism.

It belongs to the protein kinase superfamily. Ser/Thr protein kinase family.

The protein localises to the cell membrane. It catalyses the reaction L-seryl-[protein] + ATP = O-phospho-L-seryl-[protein] + ADP + H(+). It carries out the reaction L-threonyl-[protein] + ATP = O-phospho-L-threonyl-[protein] + ADP + H(+). This Arabidopsis thaliana (Mouse-ear cress) protein is G-type lectin S-receptor-like serine/threonine-protein kinase At1g61460.